A 984-amino-acid polypeptide reads, in one-letter code: MIEDEKAGLQPMDISDASVFFFQADVESKDFLTSLFDCEGKSDDRMLRYADAIIDVQNLNFDVSPQCLQSNIAEIITKFVLLSQDGSRRGLSRSFNFIDPDIIAGCREEDAIEFLLINFVRCHHELGKSGTSNCYKKTLESTRKAVFSVFVMIQRGYLESQLRSQHASLVFTKRLLEDTVSNVFLRTLVEYLASTDECDEDAITETFNPIFGILRSGIICQRFEDNKDEIVRQILRVMNLLLSIRLPSNGPRPLSNLLVNREDFLPTPSEKIQGREFGLMSFLGPFFSYGLESSARRPNHRVFVDCEEDARKYDGSVNTEQKLYFQRMDPIRTMLHQLMLPLASDQGSRNKTLRWIATIISTNDIRTRSHYDPSDVLCDHYMTNFLSVMYMFSEKIDLSKIIVDYPFLPSSLINISKETRLKMDESGAVAFASQFADRPDEYHFSTVCFFLTIAAQRLVIPPLMNQISEYSRHLKELKHKINALKEKLNTVSGFERAEVEKKLNYETEHWKLMSRHLLCVKTQAQDPALMASSMDFVDKQMKFILNLLCDNLDLLGDDSQLPTEVSQMFCALPEYFLEDALDFYIFAISNGMKLLMERNADWISRLTVLFTQYHYIKSPFLVSKLVRVLSSIQPPLWFNVVRLRMAQENLLMCMIKFYSDFEDNGDFYEKFNVRGNIQYMLEKMEEDMFYKGKFMDMARECGAEFIRFVNMVINDATWCIDESLSGLKSIHDVEKKMANKVEWDNTDQEIRNQDLGVYEEAKRKVKGWLGTAKSNLKLLLSITVNSPEPFRTPVLGERLAAMLNHNLSQLIGSKASELKVKDPRSYGWEPREFVSLLISIYLKLNMPAFVKYIAYDERTYSPEFFHNAIECMRKNSIVGFSQLESFEHLAEDVKKEYEAKAELEEEYDDVPEEFKDPIMDAIMVDPVKLPSGHVMDRAVIERHLLSTPNNPFNRAPLSHNELSPDSELKAKIQEWICQKRNSKK.

One can recognise a U-box domain in the interval 909–982 (DVPEEFKDPI…QEWICQKRNS (74 aa)).

The protein belongs to the ubiquitin conjugation factor E4 family. Forms a complex composed of deubiquitinating enzyme atx-3, E4 ubiquitin-protein ligase ufd-2 and cdc-48.1; within the complex interacts with atx-3 and cdc-48.1 (via DDDLYN motif). Forms a complex composed of cdc-48.1, myosin chaperone unc-45, ubiquitin-protein ligases ufd-2 and chn-1; the complex targets myosin chaperone unc-45 for proteasomal degradation; within the complex interacts with cdc-48.1 (via DDDLYN motif), chn-1 and unc-45. Forms a complex composed of unc-45 and myosin heavy chain B unc-54; the complex targets unfolded unc-54 for proteasomal degradation; within the complex interacts with unc-45 (via TPR domain) and unc-54. Interacts with cdc-48.2 (via DDDLYN motif). Expressed in the germline (at protein level).

It is found in the cytoplasm. The protein localises to the nucleus membrane. Its subcellular location is the nucleus. It localises to the nucleolus. The catalysed reaction is S-ubiquitinyl-[E2 ubiquitin-conjugating enzyme]-L-cysteine + [acceptor protein]-L-lysine = [E2 ubiquitin-conjugating enzyme]-L-cysteine + N(6)-ubiquitinyl-[acceptor protein]-L-lysine.. It participates in protein modification; protein ubiquitination. Its function is as follows. Acts as an E4 ubiquitin ligase mediating the assembly of polyubiquitin chains on substrates ubiquitinated by another E3 ubiquitin ligase. The elongation of preexisting ubiquitin chains preferentially targets ubiquitin 'Lys-29' and 'Lys-48' residues. Also functions as an E3 ligase in conjunction with specific E1 and E2 ligases. Probably by regulating protein ubiquitination at DNA damage repair sites, coordinates DNA double-strand-break repair and apoptosis in the germline. Required for germline apoptosis in response to DNA damage downstream of cep-1. Involved in the resolution of DNA-repair sites by promoting the release of rad-51 from DNA damage foci. In association with protein-ligase chn-1, acts as an E3/E4 ligase to poly-ubiquitinate lysine residues in the UCS domain of myosin chaperone unc-45. By targeting myosin chaperone unc-45 for proteasomal degradation, regulates myosin assembly in body wall muscles in association with cdc-48.1 and chn-1. However, in a contrasting study, acts as an E3 ligase, independently of chn-1, to poly-ubiquitinate unc-45 without promoting unc-45 proteasomal degradation. Instead, uses unc-45 as an adapter protein to recruit and poly-ubiquitinate unfolded myosin heavy chain B unc-54. The protein is Ubiquitin conjugation factor E4 ufd-2 of Caenorhabditis elegans.